Here is a 354-residue protein sequence, read N- to C-terminus: Ornithine transcarbamylase, mitochondrial (354 aa).

Residues 1–32 (MLSNLRILLNKAALRKAHTSMVRNFRYGKPVQ) constitute a mitochondrion transit peptide. Lysine 70 is subject to N6-acetyllysine; alternate. N6-succinyllysine; alternate is present on lysine 70. N6-succinyllysine is present on lysine 80. Position 88 is an N6-acetyllysine; alternate (lysine 88). Position 88 is an N6-succinyllysine; alternate (lysine 88). 90–93 (STRT) lines the carbamoyl phosphate pocket. A Phosphoserine modification is found at serine 133. Arginine 141 lines the carbamoyl phosphate pocket. An N6-acetyllysine; alternate modification is found at lysine 144. Lysine 144 bears the N6-succinyllysine; alternate mark. Histidine 168 and glutamine 171 together coordinate carbamoyl phosphate. L-ornithine is bound at residue asparagine 199. 3 positions are modified to N6-acetyllysine; alternate: lysine 221, lysine 231, and lysine 238. N6-succinyllysine; alternate is present on residues lysine 221, lysine 231, and lysine 238. L-ornithine-binding residues include aspartate 263, serine 267, and methionine 268. N6-succinyllysine is present on residues lysine 274 and lysine 289. N6-acetyllysine; alternate is present on lysine 292. Lysine 292 bears the N6-succinyllysine; alternate mark. Cysteine 303 (proton acceptor) is an active-site residue. Position 303 to 304 (303 to 304 (CL)) interacts with carbamoyl phosphate. Lysine 307 carries the N6-acetyllysine; alternate modification. An N6-succinyllysine; alternate modification is found at lysine 307. Residue arginine 330 participates in carbamoyl phosphate binding.

The protein belongs to the aspartate/ornithine carbamoyltransferase superfamily. OTCase family. As to quaternary structure, homotrimer. Post-translationally, acetylation at Lys-88 negatively regulates ornithine carbamoyltransferase activity in response to nutrient signals.

It localises to the mitochondrion matrix. It catalyses the reaction carbamoyl phosphate + L-ornithine = L-citrulline + phosphate + H(+). Its pathway is nitrogen metabolism; urea cycle; L-citrulline from L-ornithine and carbamoyl phosphate: step 1/1. Its activity is regulated as follows. Negatively regulated by lysine acetylation. In terms of biological role, catalyzes the second step of the urea cycle, the condensation of carbamoyl phosphate with L-ornithine to form L-citrulline. The urea cycle ensures the detoxification of ammonia by converting it to urea for excretion. The polypeptide is Ornithine transcarbamylase, mitochondrial (Rattus norvegicus (Rat)).